We begin with the raw amino-acid sequence, 489 residues long: Netrin-5 (489 aa).

The first 16 residues, 1–16 (MPVTFALLLLLGQATA), serve as a signal peptide directing secretion. A glycan (N-linked (GlcNAc...) asparagine) is linked at Asn-62. Disulfide bonds link Cys-157-Cys-166, Cys-159-Cys-175, Cys-177-Cys-186, Cys-189-Cys-209, Cys-212-Cys-221, Cys-214-Cys-239, Cys-242-Cys-251, Cys-254-Cys-272, Cys-275-Cys-287, Cys-277-Cys-294, Cys-296-Cys-305, Cys-308-Cys-322, Cys-345-Cys-418, Cys-349-Cys-420, and Cys-364-Cys-475. Laminin EGF-like domains lie at 157 to 211 (CQCH…PCLP), 212 to 274 (CSCN…ACRA), and 275 to 324 (CQCH…PCQR). In terms of domain architecture, NTR spans 345–475 (CQNYCNMSDT…LQQEERAGGC (131 aa)). The tract at residues 470–489 (ERAGGCRGVRAPTPSPRPEH) is disordered.

The protein localises to the secreted. Its function is as follows. Plays a role in neurogenesis. Prevents motor neuron cell body migration out of the neural tube. The sequence is that of Netrin-5 (NTN5) from Homo sapiens (Human).